The sequence spans 388 residues: 1-deoxy-D-xylulose 5-phosphate reductoisomerase (388 aa).

NADPH-binding residues include T15, G16, S17, I18, and N127. K128 is a binding site for 1-deoxy-D-xylulose 5-phosphate. E129 contributes to the NADPH binding site. D153 serves as a coordination point for Mn(2+). Positions 154, 155, 179, and 202 each coordinate 1-deoxy-D-xylulose 5-phosphate. E155 is a binding site for Mn(2+). G208 is a binding site for NADPH. 1-deoxy-D-xylulose 5-phosphate is bound by residues S215, N220, K221, and E224. E224 is a binding site for Mn(2+).

It belongs to the DXR family. The cofactor is Mg(2+). Mn(2+) serves as cofactor.

It catalyses the reaction 2-C-methyl-D-erythritol 4-phosphate + NADP(+) = 1-deoxy-D-xylulose 5-phosphate + NADPH + H(+). The protein operates within isoprenoid biosynthesis; isopentenyl diphosphate biosynthesis via DXP pathway; isopentenyl diphosphate from 1-deoxy-D-xylulose 5-phosphate: step 1/6. Its function is as follows. Catalyzes the NADPH-dependent rearrangement and reduction of 1-deoxy-D-xylulose-5-phosphate (DXP) to 2-C-methyl-D-erythritol 4-phosphate (MEP). In Bacteroides fragilis (strain YCH46), this protein is 1-deoxy-D-xylulose 5-phosphate reductoisomerase.